The chain runs to 309 residues: Putative lipid kinase YtlR (309 aa).

Residues 1–134 (MSHWFFIINP…FHLGSVNFLQ (134 aa)) enclose the DAGKc domain. ATP contacts are provided by residues 9–13 (NPTAG), Thr-40, and 69–75 (GDGTMHE). Residues Asn-229, Glu-232, and Thr-234 each contribute to the Mg(2+) site. The active-site Proton acceptor is Glu-289.

Belongs to the diacylglycerol/lipid kinase family. The cofactor is Mg(2+).

May catalyze the ATP-dependent phosphorylation of lipids other than diacylglycerol (DAG). In fact, is not able to exhibit diacylglycerol kinase activity in vitro. This chain is Putative lipid kinase YtlR (ytlR), found in Bacillus subtilis (strain 168).